The sequence spans 1782 residues: MKLFVLAAIIAAVSSDRFSSQSQSTGGQTYPSPWQVGKQYRYEVTSRTLAHLQEGPSSGSAFKAQFTIRVKSPGRLQAKLENPQHGNFNEQLPDPRELPVDLKYQPTPNIDKVFEIEIDGGRIVSLDFPTSVPVPQENLIKGLISALQLDTSAHRVIHDSQNNYDREQQQGLFRKMETDVTGDCETLYTVSPVASEWRRELPKFANEQDPVEVTKSTNYGHCHHRVAYHFGVPVGAEWTGTAHKTQEQQLIGRATYSRILTGKEGPIYKAETTSTVHVHPHLYGKQKAEVYSHVHMELISVDQDSGAEWPRAGAMRPAQSILYSLSTKQMTKHYESSSSSSSSESHEFNFPEQHEHPHQSNQRSRRSYMRSKLVTVHKVLKKRNSESSSGSSSSSADSSSTYINDDIPDIDEPAYAALYMSPQPHADKKQNAMNAQKILQDIAQQLQNPNNMPKSDFLSKFNILVRLIASMSTEQLSQTSRSIETAKTSNNIIKSDMWMIFRDGVTQAGTLPAFKQIQSWIENKKIQEEEAAQVVVALPRTLRYPTKQIMTQFFNFARSPAVKDQMFLNSSALMAATKLINLGQVNNYTAHSYYPTHMYGRLTHKHDAFVLEEILPTLAADLKATVEYKDSTKAQVYIQAIGNLGHREILKVFAPYLEGKVEISTYLRTHIVKNLKTLAKLRDRHVRAVLFSILRNTAEPYPVRVAAIQSIFISHPTGEMMQAMAEMTHNDPSVEVRAVLKSAILSAAELQHPRNFYLSRTAQAARYLVTNEEFGYQHSFKFIDDSYDEDNDIGTFVISHIGSEDSLLPKDFKIVTNSKGGAWERNTIEASFSSAERFLDYLRDSVFAPHPKFDRAHKYSAEKIAKLLNIKNDEEEPLEASFYVDFMNNQRLFSFSESDLQQLSQYISEYMKKVESGAEKHYTKVYNQDQVSIMFPVASGMPFIFKYKEPAVIHFQSKLKGKFSFPSKDNKYYEANMIKDVQFTYAINIDGNVGFMDTLSNQYSSVGVVNKLQFNIPFKFGIEIKSGLIKFRVEPLHPDQDQTLVHYSVWPYSASQKKDSLVAISQDPATKIVERRSKVFSVDSKYGQSTHAVIYAQGYTYSSDWRNFGAKFTSRDYFTNLASLLTQEDIALTHFNLKHLCKQSQSKALTITAYYDEYYNQQNSGILTDATDRNDLSPNSETRRAEMVKLVSAGINKARVRVVDLSASFEGSQDQNYVLTGTWGDSPVDSKVQGMLFAGTKSATQGNQQINAVFATTKPEIHSLSFSKPLQSDLRAPFGMHFKYGQSGEIRVSGSFDRTKKYTTELENHPLAKQCSQQTTLNNFYQDSCHKAIVMAHAPDHVEFSVSFQDMSPQYRNFSYHTYRLYEYLGYWYTEANPLKLTQNGKMDFKIDFSYFDRTYTVDIASPSGEARMRDMPIATMAPGALSFYQPLKAYELVANYFTGHQYQPYCSIDGTRIHTFSNRSYEYPLSRSWHVVMQDESTQRGNWHELAILSRRQQRDQQEIYISYKSESGQDLEIEIQPASGDSAYQVKVTTNTKKITDDDLTMYWDDVKEQPFLQYHTHKDGVLVINIEDDRIRAIYDGQRFVVFTQDYRNSTRGICGRMSGEQRDDYLTPEGLVDKPELYAAAYSLNEENSDPKTQELKALATQQAYYPEYKYTSILRSDPTWQEESQSCGEDQWQSETVYKSRSYDKHKGACEVRQQVQFYENHGDICITTSRVPSCQSHCRAGDYKIQHVQVTCKSKLDHDFRMYKEQIKKGQNPEVSGIPSVKQFKVPVTCQP.

Residues methionine 1 to serine 15 form the signal peptide. In terms of domain architecture, Vitellogenin spans tryptophan 34–phenylalanine 812. Disordered regions lie at residues histidine 333–serine 367 and valine 379–aspartate 406. Over residues glutamate 344–histidine 358 the composition is skewed to basic and acidic residues. Residues glutamate 386–serine 400 are compositionally biased toward low complexity. N-linked (GlcNAc...) asparagine glycans are attached at residues asparagine 569, asparagine 587, asparagine 1357, asparagine 1463, and asparagine 1596. In terms of domain architecture, VWFD spans proline 1449–aspartate 1638. Cysteine 1451 and cysteine 1602 are joined by a disulfide.

Heterotetramer of two heavy and two light chains. Glycosylated and phosphorylated. In terms of tissue distribution, detected in oocytes (at protein level). Produced by the fat body, where it is cleaved before being secreted into hemolymph. Sequestered then by a single class of receptor mediated endocytosis in the ovary.

It localises to the secreted. The protein resides in the cytoplasm. It is found in the cytoplasmic granule. Functionally, precursor of the egg-yolk proteins that are sources of nutrients during embryonic development. The polypeptide is Vitellogenin (VG) (Bombyx mori (Silk moth)).